The chain runs to 336 residues: Nicotinate-nucleotide--dimethylbenzimidazole phosphoribosyltransferase (336 aa).

Glutamate 304 functions as the Proton acceptor in the catalytic mechanism.

The protein belongs to the CobT family.

It catalyses the reaction 5,6-dimethylbenzimidazole + nicotinate beta-D-ribonucleotide = alpha-ribazole 5'-phosphate + nicotinate + H(+). The protein operates within nucleoside biosynthesis; alpha-ribazole biosynthesis; alpha-ribazole from 5,6-dimethylbenzimidazole: step 1/2. Its function is as follows. Catalyzes the synthesis of alpha-ribazole-5'-phosphate from nicotinate mononucleotide (NAMN) and 5,6-dimethylbenzimidazole (DMB). The sequence is that of Nicotinate-nucleotide--dimethylbenzimidazole phosphoribosyltransferase from Ruegeria sp. (strain TM1040) (Silicibacter sp.).